Reading from the N-terminus, the 266-residue chain is Beta-lactamase OXA-11 (266 aa).

Positions 1-20 (MKTFAAYVIIACLSSTALAG) are cleaved as a signal peptide. The active-site Acyl-ester intermediate is the Ser-67. N6-carboxylysine is present on Lys-70. Substrate is bound at residue 205 to 207 (KTG).

Belongs to the class-D beta-lactamase family.

It catalyses the reaction a beta-lactam + H2O = a substituted beta-amino acid. Hydrolyzes carbenicillin, oxacillin and cephalosporin. Does not hydrolyze cefoxitin or carbapenems. This Pseudomonas aeruginosa protein is Beta-lactamase OXA-11 (bla).